Consider the following 421-residue polypeptide: MPEAIRAVRGMNDILPDESDLWGFFEDTIRTWLAAYGYRNLRTPIVEQTDLFVRSIGEVTDIVEKEMYSFIDQLNGENLTLRPEGTASCVRAVIEHNLLYSGPQRLYYSGPMFRHERPQKGRYRQFHQVGVEALGFVGPDIDAELIIMCARLWRLLGIPDVRLEISTLGSIESRLIYRARLISYLEKFYDELDEDARRRLKTNPLRILDSKNPGMREILEGAPHLFDDLDEDSLIHFDALQRILRNQGISFEINHRLVRGLDYYNRTVFEWVTDKLGAQGTICAGGRYDGLIAQIGGKPAPACGFAMGIERILSLISETDVAAEIHTVPDVYVVHQGDIAAGFSWKVAESLRDAGFKVVLHSGGGSFKAQMKKADASGARFAAIIGDDEAATGQVSIKSLREAVEQVKIDLTKVAVFLENI.

Belongs to the class-II aminoacyl-tRNA synthetase family. In terms of assembly, homodimer.

It localises to the cytoplasm. It catalyses the reaction tRNA(His) + L-histidine + ATP = L-histidyl-tRNA(His) + AMP + diphosphate + H(+). The sequence is that of Histidine--tRNA ligase from Nitrosomonas eutropha (strain DSM 101675 / C91 / Nm57).